Reading from the N-terminus, the 336-residue chain is Ferredoxin--NADP reductase (336 aa).

FAD is bound by residues D37, Q45, Y50, V90, F124, D286, and T327.

Belongs to the ferredoxin--NADP reductase type 2 family. Homodimer. The cofactor is FAD.

The catalysed reaction is 2 reduced [2Fe-2S]-[ferredoxin] + NADP(+) + H(+) = 2 oxidized [2Fe-2S]-[ferredoxin] + NADPH. The sequence is that of Ferredoxin--NADP reductase from Enterococcus faecalis (strain ATCC 700802 / V583).